We begin with the raw amino-acid sequence, 554 residues long: Putative F-box/LRR-repeat protein 8 (554 aa).

Positions 71–117 (YDYISNLPDECLSLIFQSLTCADLKRCSLVCRRWLTIEGQCRHRLSL) constitute an F-box domain. LRR repeat units lie at residues 119-144 (AQSD…VLRS), 148-173 (SLGI…KLRG), 174-199 (CPEI…SFGS), 205-224 (KGMN…SVKR), 250-275 (KELH…KIFR), 301-325 (RIQM…HLVK), 326-351 (TPDC…HIDG), 354-379 (TNRI…VLIG), 383-404 (TKLS…ALCG), 405-428 (SDTV…KLCI), 430-455 (NCPI…KVKK), and 456-480 (CRGV…NLDA).

In Arabidopsis thaliana (Mouse-ear cress), this protein is Putative F-box/LRR-repeat protein 8 (FBL8).